The primary structure comprises 868 residues: Leucine--tRNA ligase (868 aa).

A 'HIGH' region motif is present at residues 42–52 (PYPSGKLHMGH). The 'KMSKS' region signature appears at 624-628 (TMSKS). Residue K627 participates in ATP binding.

The protein belongs to the class-I aminoacyl-tRNA synthetase family.

The protein resides in the cytoplasm. The enzyme catalyses tRNA(Leu) + L-leucine + ATP = L-leucyl-tRNA(Leu) + AMP + diphosphate. This is Leucine--tRNA ligase from Nitrosomonas eutropha (strain DSM 101675 / C91 / Nm57).